A 202-amino-acid chain; its full sequence is Josephin-1 (202 aa).

S15 bears the Phosphoserine mark. Residues 23 to 202 (PPQIYHEKQR…EAHQSWRTDV (180 aa)) form the Josephin domain. C36 functions as the Nucleophile in the catalytic mechanism. H139 functions as the Proton acceptor in the catalytic mechanism.

Interacts with beta-actin/ACTB. Post-translationally, monoubiquitinated. Ubiquitination activates deubiquitination activity in vitro.

The protein localises to the cell membrane. It localises to the cytoplasm. The enzyme catalyses Thiol-dependent hydrolysis of ester, thioester, amide, peptide and isopeptide bonds formed by the C-terminal Gly of ubiquitin (a 76-residue protein attached to proteins as an intracellular targeting signal).. In terms of biological role, deubiquitinates monoubiquitinated probes (in vitro). When ubiquitinated, cleaves 'Lys-63'-linked and 'Lys-48'-linked poly-ubiquitin chains (in vitro), hence may act as a deubiquitinating enzyme. May increase macropinocytosis and suppress clathrin- and caveolae-mediated endocytosis. May enhance membrane dynamics and cell motility independently of its catalytic activity. This is Josephin-1 (JOSD1) from Pongo abelii (Sumatran orangutan).